The sequence spans 183 residues: Small ribosomal subunit protein uS4c (183 aa).

Residues 82-143 (MRLDNILFRL…KQRSKALIQN (62 aa)) form the S4 RNA-binding domain.

This sequence belongs to the universal ribosomal protein uS4 family. In terms of assembly, part of the 30S ribosomal subunit. Contacts protein S5. The interaction surface between S4 and S5 is involved in control of translational fidelity.

The protein localises to the plastid. The protein resides in the chloroplast. Functionally, one of the primary rRNA binding proteins, it binds directly to 16S rRNA where it nucleates assembly of the body of the 30S subunit. With S5 and S12 plays an important role in translational accuracy. In Gladiolus communis (Cornflag), this protein is Small ribosomal subunit protein uS4c (rps4).